Here is a 449-residue protein sequence, read N- to C-terminus: 8-oxoguanine deaminase (449 aa).

2 residues coordinate Zn(2+): H64 and H66. Q69 lines the substrate pocket. H232 is a binding site for Zn(2+). Substrate contacts are provided by E235 and H269. H269 and D320 together coordinate Zn(2+).

This sequence belongs to the metallo-dependent hydrolases superfamily. ATZ/TRZ family. As to quaternary structure, homodimer. It depends on Zn(2+) as a cofactor.

The enzyme catalyses 8-oxoguanine + H2O + H(+) = urate + NH4(+). It participates in purine metabolism. In terms of biological role, specifically deaminates 8-Oxoguanine (8-oxoG) to uric acid. 8-oxoG is formed via the oxidation of guanine within DNA by reactive oxygen species and leads, if uncorrected, to the incorporation of 8-oxoG:A mismatches and eventually to G:C to T:A transversions. The chain is 8-oxoguanine deaminase from Pseudomonas aeruginosa (strain ATCC 15692 / DSM 22644 / CIP 104116 / JCM 14847 / LMG 12228 / 1C / PRS 101 / PAO1).